The sequence spans 193 residues: Acyl carrier protein phosphodiesterase (193 aa).

Belongs to the AcpH family.

It carries out the reaction holo-[ACP] + H2O = apo-[ACP] + (R)-4'-phosphopantetheine + H(+). In terms of biological role, converts holo-ACP to apo-ACP by hydrolytic cleavage of the phosphopantetheine prosthetic group from ACP. The protein is Acyl carrier protein phosphodiesterase of Enterobacter sp. (strain 638).